The following is a 332-amino-acid chain: Fructose-1,6-bisphosphatase class 1 (332 aa).

Mg(2+)-binding residues include Glu-91, Asp-112, Leu-114, and Asp-115. Residues 115 to 118 (DGSS), Asn-208, Tyr-241, and Lys-271 each bind substrate. A Mg(2+)-binding site is contributed by Glu-277.

The protein belongs to the FBPase class 1 family. In terms of assembly, homotetramer. Requires Mg(2+) as cofactor.

Its subcellular location is the cytoplasm. It catalyses the reaction beta-D-fructose 1,6-bisphosphate + H2O = beta-D-fructose 6-phosphate + phosphate. It functions in the pathway carbohydrate biosynthesis; Calvin cycle. This is Fructose-1,6-bisphosphatase class 1 from Chlorobium phaeobacteroides (strain DSM 266 / SMG 266 / 2430).